The chain runs to 188 residues: Elongation factor P-like protein (188 aa).

The protein belongs to the elongation factor P family.

The protein is Elongation factor P-like protein of Aliivibrio fischeri (strain MJ11) (Vibrio fischeri).